Reading from the N-terminus, the 303-residue chain is Diaminopimelate epimerase (303 aa).

Asparagine 14 contacts substrate. Residues 60–74 (PVSSAGATADAAAGR) show a composition bias toward low complexity. The disordered stretch occupies residues 60–86 (PVSSAGATADAAAGRPPQPSAGRPPQP). Residues 75-86 (PPQPSAGRPPQP) show a composition bias toward pro residues. Asparagine 97 is a substrate binding site. The Proton donor role is filled by cysteine 106. Residues 107–108 (GN), asparagine 178, asparagine 209, and 227–228 (ER) each bind substrate. Cysteine 236 acts as the Proton acceptor in catalysis. 237-238 (GS) lines the substrate pocket.

It belongs to the diaminopimelate epimerase family. Homodimer.

It localises to the cytoplasm. The catalysed reaction is (2S,6S)-2,6-diaminopimelate = meso-2,6-diaminopimelate. Its pathway is amino-acid biosynthesis; L-lysine biosynthesis via DAP pathway; DL-2,6-diaminopimelate from LL-2,6-diaminopimelate: step 1/1. In terms of biological role, catalyzes the stereoinversion of LL-2,6-diaminopimelate (L,L-DAP) to meso-diaminopimelate (meso-DAP), a precursor of L-lysine and an essential component of the bacterial peptidoglycan. The chain is Diaminopimelate epimerase from Acidothermus cellulolyticus (strain ATCC 43068 / DSM 8971 / 11B).